The following is a 270-amino-acid chain: Phosphatidylglycerol--prolipoprotein diacylglyceryl transferase (270 aa).

The next 4 membrane-spanning stretches (helical) occupy residues 19–39 (FPVYWYGIIIGTGVLLGLWLA), 56–76 (LVLIAVPIAILFARMYYVIFE), 92–112 (QGGLAIHGGLIGAVITGILFA), and 116–136 (GVSFWKLADIAAPSILLGQAI). Position 138 (Arg138) interacts with a 1,2-diacyl-sn-glycero-3-phospho-(1'-sn-glycerol). The next 3 helical transmembrane spans lie at 178 to 198 (HPTFLYESLWNFAGVILLLAL), 206 to 226 (GELFFTYLIWYSIGRFFVEGL), and 236 to 256 (LRIAQVMSIGLVVISIIFIIV).

This sequence belongs to the Lgt family.

The protein resides in the cell membrane. The enzyme catalyses L-cysteinyl-[prolipoprotein] + a 1,2-diacyl-sn-glycero-3-phospho-(1'-sn-glycerol) = an S-1,2-diacyl-sn-glyceryl-L-cysteinyl-[prolipoprotein] + sn-glycerol 1-phosphate + H(+). Its pathway is protein modification; lipoprotein biosynthesis (diacylglyceryl transfer). In terms of biological role, catalyzes the transfer of the diacylglyceryl group from phosphatidylglycerol to the sulfhydryl group of the N-terminal cysteine of a prolipoprotein, the first step in the formation of mature lipoproteins. The polypeptide is Phosphatidylglycerol--prolipoprotein diacylglyceryl transferase (Bacillus thuringiensis subsp. konkukian (strain 97-27)).